We begin with the raw amino-acid sequence, 702 residues long: Antigen peptide transporter 2 (702 aa).

The Lumenal portion of the chain corresponds to 1–6 (MALSYL). The helical transmembrane segment at 7 to 27 (RPWVSLLLADMALLGLLQGSL) threads the bilayer. Residues 28–56 (GNLLPQGLPGLWIEGTLRLGVLWGLLKVG) are Cytoplasmic-facing. The helical transmembrane segment at 57–77 (ELLGLVGTLLPLLCLATPLFF) threads the bilayer. At 78–98 (SLRALVGGTASTSVVRVASAS) the chain is on the lumenal side. A helical transmembrane segment spans residues 99 to 119 (WGWLLAGYGAVALSWAVWAVL). Residues 120–147 (SPAGVQEKEPGQENRTLMKRLLKLSRPD) lie on the Cytoplasmic side of the membrane. Residues 148 to 168 (LPFLIAAFFFLVVAVWGETLI) form a helical membrane-spanning segment. The ABC transmembrane type-1 domain maps to 151–434 (LIAAFFFLVV…LVYMYGDMLS (284 aa)). At 169-186 (PRYSGRVIDILGGDFDPD) the chain is on the lumenal side. A helical transmembrane segment spans residues 187–207 (AFASAIFFMCLFSVGSSFSAG). Residues 208 to 265 (CRGGSFLFTMSRINLRIREQLFSSLLRQDLGFFQETKTGELNSRLSSDTSLMSRWLPF) are Cytoplasmic-facing. The helical transmembrane segment at 266–286 (NANILLRSLVKVVGLYFFMLQ) threads the bilayer. Over 287-292 (VSPRLT) the chain is Lumenal. Residues 293–313 (FLSLLDLPLTIAAEKVYNPRH) form a helical membrane-spanning segment. The part of the peptide-binding site stretch occupies residues 300 to 388 (PLTIAAEKVY…RRVMALGMQV (89 aa)). The Cytoplasmic segment spans residues 314-373 (QAVLKEIQDAVAKAGQVVREAVGGLQTVRSFGAEEQEVSHYKEALERCRQLWWRRDLEKD). Residues 374–394 (VYLVIRRVMALGMQVLILNCG) traverse the membrane as a helical segment. Residues 395-407 (VQQILAGEVTRGG) are Lumenal-facing. The helical transmembrane segment at 408–428 (LLSFLLYQEEVGQYVRNLVYM) threads the bilayer. Positions 413–432 (LYQEEVGQYVRNLVYMYGDM) are part of the peptide-binding site. The Cytoplasmic portion of the chain corresponds to 429 to 702 (YGDMLSNVGA…AHLVQQRLEA (274 aa)). Residues 467–701 (VEFQDVSFSY…YAHLVQQRLE (235 aa)) form the ABC transporter domain. 502 to 509 (GPNGSGKS) contributes to the ATP binding site.

It belongs to the ABC transporter superfamily. ABCB family. MHC peptide exporter (TC 3.A.1.209) subfamily. Heterodimer of TAP1 and TAP2 (TAP1-TAP2). A component of the peptide loading complex (PLC), interacts via TAPBP with MHCI heterodimer; this interaction mediates peptide-MHCI assembly. Mg(2+) is required as a cofactor.

The protein resides in the endoplasmic reticulum membrane. It carries out the reaction a peptide antigen(in) + ATP + H2O = a peptide antigen(out) + ADP + phosphate + H(+). Functionally, ABC transporter associated with antigen processing. In complex with TAP1 mediates unidirectional translocation of peptide antigens from cytosol to endoplasmic reticulum (ER) for loading onto MHC class I (MHCI) molecules. Uses the chemical energy of ATP to export peptides against the concentration gradient. During the transport cycle alternates between 'inward-facing' state with peptide binding site facing the cytosol to 'outward-facing' state with peptide binding site facing the ER lumen. Peptide antigen binding to ATP-loaded TAP1-TAP2 induces a switch to hydrolysis-competent 'outward-facing' conformation ready for peptide loading onto nascent MHCI molecules. Subsequently ATP hydrolysis resets the transporter to the 'inward facing' state for a new cycle. As a component of the peptide loading complex (PLC), acts as a molecular scaffold essential for peptide-MHCI assembly and antigen presentation. The chain is Antigen peptide transporter 2 (Tap2) from Mus musculus (Mouse).